The chain runs to 106 residues: Iron-sulfur cluster assembly protein CyaY (106 aa).

The protein belongs to the frataxin family.

In terms of biological role, involved in iron-sulfur (Fe-S) cluster assembly. May act as a regulator of Fe-S biogenesis. The sequence is that of Iron-sulfur cluster assembly protein CyaY from Shigella flexneri.